Reading from the N-terminus, the 40-residue chain is Acyl-CoA-binding protein 2 (40 aa).

Basic and acidic residues predominate over residues alanine 1–threonine 15. Residues alanine 1–lysine 25 are disordered. Residues leucine 2–valine 40 form the ACB domain.

The protein belongs to the ACBP family.

It is found in the cytoplasm. Its function is as follows. Binds medium- and long-chain acyl-CoA esters with very high affinity and may function as an intracellular carrier of acyl-CoA esters. The protein is Acyl-CoA-binding protein 2 of Digitalis lanata (Grecian foxglove).